The primary structure comprises 140 residues: Ribonuclease P protein component (140 aa).

Belongs to the RnpA family. In terms of assembly, consists of a catalytic RNA component (M1 or rnpB) and a protein subunit.

The catalysed reaction is Endonucleolytic cleavage of RNA, removing 5'-extranucleotides from tRNA precursor.. RNaseP catalyzes the removal of the 5'-leader sequence from pre-tRNA to produce the mature 5'-terminus. It can also cleave other RNA substrates such as 4.5S RNA. The protein component plays an auxiliary but essential role in vivo by binding to the 5'-leader sequence and broadening the substrate specificity of the ribozyme. The chain is Ribonuclease P protein component from Nostoc punctiforme (strain ATCC 29133 / PCC 73102).